Here is a 204-residue protein sequence, read N- to C-terminus: Holliday junction branch migration complex subunit RuvA (204 aa).

A domain I region spans residues 1-64; that stretch reads MIAKLTGILD…ETDQRLIGFT (64 aa). The interval 65–143 is domain II; it reads SAGERAWFRL…GLAGYASPVG (79 aa). The tract at residues 144–154 is flexible linker; sequence PGGEAFVAPPG. The domain III stretch occupies residues 154–204; sequence GNASADAVSALQNLGFKPAVASSAVAAAVKELGEDAGLNDLVRVALKRAAG.

This sequence belongs to the RuvA family. Homotetramer. Forms an RuvA(8)-RuvB(12)-Holliday junction (HJ) complex. HJ DNA is sandwiched between 2 RuvA tetramers; dsDNA enters through RuvA and exits via RuvB. An RuvB hexamer assembles on each DNA strand where it exits the tetramer. Each RuvB hexamer is contacted by two RuvA subunits (via domain III) on 2 adjacent RuvB subunits; this complex drives branch migration. In the full resolvosome a probable DNA-RuvA(4)-RuvB(12)-RuvC(2) complex forms which resolves the HJ.

Its subcellular location is the cytoplasm. The RuvA-RuvB-RuvC complex processes Holliday junction (HJ) DNA during genetic recombination and DNA repair, while the RuvA-RuvB complex plays an important role in the rescue of blocked DNA replication forks via replication fork reversal (RFR). RuvA specifically binds to HJ cruciform DNA, conferring on it an open structure. The RuvB hexamer acts as an ATP-dependent pump, pulling dsDNA into and through the RuvAB complex. HJ branch migration allows RuvC to scan DNA until it finds its consensus sequence, where it cleaves and resolves the cruciform DNA. This Novosphingobium aromaticivorans (strain ATCC 700278 / DSM 12444 / CCUG 56034 / CIP 105152 / NBRC 16084 / F199) protein is Holliday junction branch migration complex subunit RuvA.